Reading from the N-terminus, the 465-residue chain is 23S rRNA (uracil(1939)-C(5))-methyltransferase RlmD (465 aa).

Residues 1–22 form a disordered region; sequence MSEAVPTSARKSKNAPVAPGPA. Residues 16-80 enclose the TRAM domain; the sequence is PVAPGPAPVL…PSYEQATVVD (65 aa). The [4Fe-4S] cluster site is built by cysteine 93, cysteine 99, cysteine 102, and cysteine 181. Residues glutamine 289, phenylalanine 318, asparagine 323, glutamate 339, asparagine 367, and aspartate 388 each coordinate S-adenosyl-L-methionine. Cysteine 421 serves as the catalytic Nucleophile.

Belongs to the class I-like SAM-binding methyltransferase superfamily. RNA M5U methyltransferase family. RlmD subfamily.

The enzyme catalyses uridine(1939) in 23S rRNA + S-adenosyl-L-methionine = 5-methyluridine(1939) in 23S rRNA + S-adenosyl-L-homocysteine + H(+). In terms of biological role, catalyzes the formation of 5-methyl-uridine at position 1939 (m5U1939) in 23S rRNA. In Burkholderia cenocepacia (strain HI2424), this protein is 23S rRNA (uracil(1939)-C(5))-methyltransferase RlmD.